The following is a 478-amino-acid chain: Melanopsin (478 aa).

Positions 1 to 14 (MNPPSGPRVPPSPT) are enriched in pro residues. The disordered stretch occupies residues 1–32 (MNPPSGPRVPPSPTQEPSCMATPAPPSWWDSS). Over 1–72 (MNPPSGPRVP…VDVPDHAHYT (72 aa)) the chain is Extracellular. Residues 73-93 (LGTVILLVGLTGMLGNLTVIY) form a helical membrane-spanning segment. Residues 94–107 (TFCRSRSLRTPANM) are Cytoplasmic-facing. Residues 108–128 (FIINLAVSDFLMSFTQAPVFF) form a helical membrane-spanning segment. The Extracellular portion of the chain corresponds to 129-144 (TSSLYKQWLFGETGCE). Residues cysteine 143 and cysteine 221 are joined by a disulfide bond. Residues 145-165 (FYAFCGALFGISSMITLTAIA) form a helical membrane-spanning segment. Residues 166–188 (LDRYLVITRPLATFGVASKRRAA) are Cytoplasmic-facing. A helical transmembrane segment spans residues 189 to 209 (FVLLGVWLYALAWSLPPFFGW). Residues 210 to 238 (SAYVPEGLLTSCSWDYMSFTPAVRAYTML) are Extracellular-facing. Residues 239–259 (LCCFVFFLPLLIIIYCYIFIF) traverse the membrane as a helical segment. Topologically, residues 260 to 296 (RAIRETGRALQTFGACKGNGESLWQRQRLQSECKMAK) are cytoplasmic. A helical transmembrane segment spans residues 297-317 (IMLLVILLFVLSWAPYSAVAL). Over 318 to 332 (VAFAGYAHVLTPYMS) the chain is Extracellular. Residues 333 to 353 (SVPAVIAKASAIHNPIIYAIT) traverse the membrane as a helical segment. Position 340 is an N6-(retinylidene)lysine (lysine 340). Residues 354–478 (HPKYRVAIAQ…GLIPSQDPRM (125 aa)) are Cytoplasmic-facing. Positions 440–478 (LYGQGLEDLEAKAPPRPQGHEAETPGKTKGLIPSQDPRM) are disordered. Residues 448-465 (LEAKAPPRPQGHEAETPG) show a composition bias toward basic and acidic residues.

The protein belongs to the G-protein coupled receptor 1 family. Opsin subfamily. In terms of tissue distribution, expressed in the retina.

It localises to the cell membrane. Its subcellular location is the cell projection. The protein localises to the axon. It is found in the dendrite. The protein resides in the perikaryon. Its function is as follows. Photoreceptor that binds cis-retinaldehydes. Contributes to pupillar reflex, photoentrainment and other non-image forming responses to light. May be involved in the optokinetic visual tracking response. May be involved in the regulation of retinal hyaloid vessel growth and regression. This Homo sapiens (Human) protein is Melanopsin (OPN4).